Reading from the N-terminus, the 542-residue chain is Sterile alpha motif domain-containing protein 11 (542 aa).

The segment at 268–364 (LLALPPQGPP…GRGLLSGSTL (97 aa)) is disordered. Over residues 273–285 (PQGPPGPGPPIPP) the composition is skewed to pro residues. Threonine 342 is modified (phosphothreonine). Residues 404 to 469 (WTVDDVCNFV…AQVAKRLGRV (66 aa)) enclose the SAM domain. The interval 486–542 (LQAPELSPGHQPLSPATTTSPYEGTHLPTGQASPKQENGSGTIALLSGAPDPSQLLQ) is disordered. Serine 499 carries the phosphoserine modification. Over residues 499–526 (SPATTTSPYEGTHLPTGQASPKQENGSG) the composition is skewed to polar residues.

In terms of assembly, self-associates. Component of a Polycomb group (PcG) multiprotein PRC1-like complex. Interacts with SAMD7 and PHC2. As to expression, expressed in the outer nuclear layer of rod photoreceptors in the retina (at protein level). Predominantly expressed in retinal photoreceptors and pineal gland.

The protein resides in the nucleus. Its function is as follows. Component of a Polycomb group (PcG) multiprotein PRC1-like complex, essential for establishing rod photoreceptor cell identity and function by silencing nonrod gene expression in developing rod photoreceptor cells. In Mus musculus (Mouse), this protein is Sterile alpha motif domain-containing protein 11 (Samd11).